The chain runs to 268 residues: Undecaprenyl-diphosphatase (268 aa).

A run of 8 helical transmembrane segments spans residues 9–29 (VILG…TGHL), 47–67 (FDVL…FAKL), 83–103 (FIIG…AAGS), 107–127 (LFLF…AVLL), 144–164 (FPVL…IPGV), 184–204 (AAEF…VYDL), 218–238 (IVAV…KTFL), and 246–266 (FQLF…ALAM).

Belongs to the UppP family.

The protein resides in the cell inner membrane. It catalyses the reaction di-trans,octa-cis-undecaprenyl diphosphate + H2O = di-trans,octa-cis-undecaprenyl phosphate + phosphate + H(+). Catalyzes the dephosphorylation of undecaprenyl diphosphate (UPP). Confers resistance to bacitracin. The protein is Undecaprenyl-diphosphatase of Rhodopseudomonas palustris (strain HaA2).